We begin with the raw amino-acid sequence, 562 residues long: Oxygen-dependent choline dehydrogenase (562 aa).

An FAD-binding site is contributed by 4 to 33 (DYIIIGAGSAGNVLATRLTEDPNTTVLLLE). H473 (proton acceptor) is an active-site residue.

The protein belongs to the GMC oxidoreductase family. FAD is required as a cofactor.

The catalysed reaction is choline + A = betaine aldehyde + AH2. It carries out the reaction betaine aldehyde + NAD(+) + H2O = glycine betaine + NADH + 2 H(+). It participates in amine and polyamine biosynthesis; betaine biosynthesis via choline pathway; betaine aldehyde from choline (cytochrome c reductase route): step 1/1. Its function is as follows. Involved in the biosynthesis of the osmoprotectant glycine betaine. Catalyzes the oxidation of choline to betaine aldehyde and betaine aldehyde to glycine betaine at the same rate. The sequence is that of Oxygen-dependent choline dehydrogenase from Escherichia coli O45:K1 (strain S88 / ExPEC).